The following is a 101-amino-acid chain: Putative septation protein SpoVG (101 aa).

The protein belongs to the SpoVG family.

Functionally, could be involved in septation. This Anaeromyxobacter dehalogenans (strain 2CP-C) protein is Putative septation protein SpoVG.